The primary structure comprises 920 residues: GTPase activating protein homolog 1 (920 aa).

A compositionally biased stretch (low complexity) spans 65–87 (NLGGLSNDSTNNNSNSNNTIDSS). The tract at residues 65–91 (NLGGLSNDSTNNNSNSNNTIDSSKPLS) is disordered. Residues 90–344 (LSFENDMSDG…FVDIIDPEVD (255 aa)) form the F-BAR domain. A coiled-coil region spans residues 184-276 (LNEAIKDMEK…EDEYKEQINE (93 aa)). The segment covering 403–449 (TNTITSQSGSTIISNGASQPIEIPSPQPISEQQQIPPQQQQQQQQAQ) has biased composition (low complexity). 2 disordered regions span residues 403-468 (TNTI…PMGR) and 490-518 (STSS…LSKS). The span at 450-468 (VPPTSINQSSSPPVNPMGR) shows a compositional bias: polar residues. Positions 490 to 513 (STSSLLTKDGNSTTSSNTSTSNSN) are enriched in low complexity. The region spanning 533–716 (VELEVLIEND…NMIIDSLETK (184 aa)) is the Rho-GAP domain. The segment at 727 to 836 (PIIPDDENSD…VSSNGNNINS (110 aa)) is disordered. A compositionally biased stretch (acidic residues) spans 730–741 (PDDENSDDDDDD). Residues 757–836 (NDINTTNINN…VSSNGNNINS (80 aa)) are compositionally biased toward low complexity.

It is found in the cytoplasm. The protein localises to the contractile vacuole. Functionally, rho GTPase-activating protein involved in the signal transduction pathway. Regulator of the contractile vacuole network as well as involved in driving vacuole emptying. In Dictyostelium discoideum (Social amoeba), this protein is GTPase activating protein homolog 1 (mgp1).